The sequence spans 173 residues: Gamma-crystallin S-1 (173 aa).

Beta/gamma crystallin 'Greek key' domains follow at residues glycine 2–serine 40 and aspartate 41–proline 83. Residues histidine 84–serine 88 form a connecting peptide region. Beta/gamma crystallin 'Greek key' domains lie at tyrosine 89–aspartate 129 and glycine 130–methionine 172.

Belongs to the beta/gamma-crystallin family.

Crystallins are the dominant structural components of the vertebrate eye lens. The chain is Gamma-crystallin S-1 (GS-1) from Chiloscyllium indicum (Slender bamboo shark).